The chain runs to 359 residues: Histidinol-phosphate aminotransferase (359 aa).

Position 217 is an N6-(pyridoxal phosphate)lysine (K217).

Belongs to the class-II pyridoxal-phosphate-dependent aminotransferase family. Histidinol-phosphate aminotransferase subfamily. As to quaternary structure, homodimer. It depends on pyridoxal 5'-phosphate as a cofactor.

It carries out the reaction L-histidinol phosphate + 2-oxoglutarate = 3-(imidazol-4-yl)-2-oxopropyl phosphate + L-glutamate. It functions in the pathway amino-acid biosynthesis; L-histidine biosynthesis; L-histidine from 5-phospho-alpha-D-ribose 1-diphosphate: step 7/9. The chain is Histidinol-phosphate aminotransferase from Salmonella newport (strain SL254).